Here is a 973-residue protein sequence, read N- to C-terminus: Leucine--tRNA ligase, chloroplastic/mitochondrial (973 aa).

Positions 126-135 (PSGAGLHVGH) match the 'HIGH' region motif. The 'KMSKS' region signature appears at 730–734 (KMSKS). Position 733 (lysine 733) interacts with ATP.

The protein belongs to the class-I aminoacyl-tRNA synthetase family.

The protein resides in the plastid. The protein localises to the chloroplast. Its subcellular location is the mitochondrion. It carries out the reaction tRNA(Leu) + L-leucine + ATP = L-leucyl-tRNA(Leu) + AMP + diphosphate. In terms of biological role, catalyzes the specific attachment of an amino acid to its cognate tRNA in a two step reaction: the amino acid (AA) is first activated by ATP to form AA-AMP and then transferred to the acceptor end of the tRNA. The chain is Leucine--tRNA ligase, chloroplastic/mitochondrial from Arabidopsis thaliana (Mouse-ear cress).